Consider the following 324-residue polypeptide: Phospho-N-acetylmuramoyl-pentapeptide-transferase (324 aa).

10 helical membrane passes run 5 to 25, 52 to 72, 77 to 97, 122 to 142, 149 to 169, 176 to 196, 201 to 221, 227 to 247, 253 to 273, and 302 to 322; these read GLLV…PLFI, PTMG…IMAI, LGAE…IGFL, VIAI…YIMI, FELG…GSNA, LDGL…IIAV, FGVA…LVFN, VFMG…VAIL, LLVI…IQVI, and VVVT…YIGV.

The protein belongs to the glycosyltransferase 4 family. MraY subfamily. The cofactor is Mg(2+).

Its subcellular location is the cell membrane. It carries out the reaction UDP-N-acetyl-alpha-D-muramoyl-L-alanyl-gamma-D-glutamyl-meso-2,6-diaminopimeloyl-D-alanyl-D-alanine + di-trans,octa-cis-undecaprenyl phosphate = di-trans,octa-cis-undecaprenyl diphospho-N-acetyl-alpha-D-muramoyl-L-alanyl-D-glutamyl-meso-2,6-diaminopimeloyl-D-alanyl-D-alanine + UMP. It participates in cell wall biogenesis; peptidoglycan biosynthesis. In terms of biological role, catalyzes the initial step of the lipid cycle reactions in the biosynthesis of the cell wall peptidoglycan: transfers peptidoglycan precursor phospho-MurNAc-pentapeptide from UDP-MurNAc-pentapeptide onto the lipid carrier undecaprenyl phosphate, yielding undecaprenyl-pyrophosphoryl-MurNAc-pentapeptide, known as lipid I. This is Phospho-N-acetylmuramoyl-pentapeptide-transferase from Bacillus cereus (strain AH820).